The primary structure comprises 426 residues: Enolase (426 aa).

Residue Gln163 participates in (2R)-2-phosphoglycerate binding. The active-site Proton donor is the Glu205. Residues Asp242, Glu286, and Asp313 each coordinate Mg(2+). (2R)-2-phosphoglycerate-binding residues include Lys338, Arg367, Ser368, and Lys389. Residue Lys338 is the Proton acceptor of the active site.

This sequence belongs to the enolase family. Requires Mg(2+) as cofactor.

The protein localises to the cytoplasm. It localises to the secreted. The protein resides in the cell surface. It catalyses the reaction (2R)-2-phosphoglycerate = phosphoenolpyruvate + H2O. It functions in the pathway carbohydrate degradation; glycolysis; pyruvate from D-glyceraldehyde 3-phosphate: step 4/5. In terms of biological role, catalyzes the reversible conversion of 2-phosphoglycerate (2-PG) into phosphoenolpyruvate (PEP). It is essential for the degradation of carbohydrates via glycolysis. The protein is Enolase of Syntrophobacter fumaroxidans (strain DSM 10017 / MPOB).